Consider the following 199-residue polypeptide: Octanoyltransferase (199 aa).

In terms of domain architecture, BPL/LPL catalytic spans 27-199 (SNSCDELWLL…FVQYFLTQFK (173 aa)). Residues 66–73 (RGGQVTYH), 133–135 (SIG), and 146–148 (GIA) each bind substrate. Cysteine 164 acts as the Acyl-thioester intermediate in catalysis.

This sequence belongs to the LipB family.

The protein resides in the cytoplasm. The catalysed reaction is octanoyl-[ACP] + L-lysyl-[protein] = N(6)-octanoyl-L-lysyl-[protein] + holo-[ACP] + H(+). The protein operates within protein modification; protein lipoylation via endogenous pathway; protein N(6)-(lipoyl)lysine from octanoyl-[acyl-carrier-protein]: step 1/2. Functionally, catalyzes the transfer of endogenously produced octanoic acid from octanoyl-acyl-carrier-protein onto the lipoyl domains of lipoate-dependent enzymes. Lipoyl-ACP can also act as a substrate although octanoyl-ACP is likely to be the physiological substrate. This Legionella pneumophila (strain Corby) protein is Octanoyltransferase.